The following is a 279-amino-acid chain: Probable cyclic nucleotide phosphodiesterase Psyc_2036 (279 aa).

Fe cation contacts are provided by Asp-23, His-25, Asp-70, Asn-100, His-179, His-218, and His-220. AMP-binding positions include His-25, Asp-70, and 100–101 (NH). His-220 is a binding site for AMP.

The protein belongs to the cyclic nucleotide phosphodiesterase class-III family. It depends on Fe(2+) as a cofactor.

This chain is Probable cyclic nucleotide phosphodiesterase Psyc_2036, found in Psychrobacter arcticus (strain DSM 17307 / VKM B-2377 / 273-4).